Consider the following 47-residue polypeptide: Cytochrome b559 subunit beta (47 aa).

A helical transmembrane segment spans residues Trp23–Ala39. His27 contributes to the heme binding site.

It belongs to the PsbE/PsbF family. In terms of assembly, heterodimer of an alpha subunit and a beta subunit. PSII is composed of 1 copy each of membrane proteins PsbA, PsbB, PsbC, PsbD, PsbE, PsbF, PsbH, PsbI, PsbJ, PsbK, PsbL, PsbM, PsbT, PsbX, PsbY, Psb30/Ycf12, peripheral proteins PsbO, CyanoQ (PsbQ), PsbU, PsbV and a large number of cofactors. It forms dimeric complexes. The cofactor is heme b.

It is found in the cellular thylakoid membrane. Its function is as follows. This b-type cytochrome is tightly associated with the reaction center of photosystem II (PSII). PSII is a light-driven water:plastoquinone oxidoreductase that uses light energy to abstract electrons from H(2)O, generating O(2) and a proton gradient subsequently used for ATP formation. It consists of a core antenna complex that captures photons, and an electron transfer chain that converts photonic excitation into a charge separation. This Prochlorococcus marinus subsp. pastoris (strain CCMP1986 / NIES-2087 / MED4) protein is Cytochrome b559 subunit beta.